A 644-amino-acid chain; its full sequence is Chaperone protein DnaK (644 aa).

A Phosphothreonine; by autocatalysis modification is found at Thr199. Residues Ala550–Arg584 show a composition bias toward basic and acidic residues. Disordered stretches follow at residues Ala550 to Ser586 and Tyr599 to Lys644. A compositionally biased stretch (low complexity) spans Ser600–Gly623.

This sequence belongs to the heat shock protein 70 family.

Acts as a chaperone. The chain is Chaperone protein DnaK from Leptospira biflexa serovar Patoc (strain Patoc 1 / Ames).